We begin with the raw amino-acid sequence, 424 residues long: Tyrosine--tRNA ligase (424 aa).

An L-tyrosine-binding site is contributed by Tyr-37. The short motif at 42–51 (PTADSLHLGH) is the 'HIGH' region element. An N6-acetyllysine modification is found at Lys-144. The L-tyrosine site is built by Tyr-175 and Gln-179. The 'KMSKS' region motif lies at 235 to 239 (KFGKT). An ATP-binding site is contributed by Lys-238. The 58-residue stretch at 357–414 (ADLMQALVDSELQPSRGQARKTIASNAITINGEKQSDPEYFFKEEDRLFGRFTLLRRG) folds into the S4 RNA-binding domain.

It belongs to the class-I aminoacyl-tRNA synthetase family. TyrS type 1 subfamily. Homodimer.

The protein localises to the cytoplasm. The enzyme catalyses tRNA(Tyr) + L-tyrosine + ATP = L-tyrosyl-tRNA(Tyr) + AMP + diphosphate + H(+). In terms of biological role, catalyzes the attachment of tyrosine to tRNA(Tyr) in a two-step reaction: tyrosine is first activated by ATP to form Tyr-AMP and then transferred to the acceptor end of tRNA(Tyr). This chain is Tyrosine--tRNA ligase, found in Shigella boydii serotype 4 (strain Sb227).